The chain runs to 252 residues: 3-dehydroquinate dehydratase (252 aa).

3-dehydroquinate contacts are provided by residues Glu-46 to Arg-48 and Arg-82. His-143 functions as the Proton donor/acceptor in the catalytic mechanism. The active-site Schiff-base intermediate with substrate is Lys-170. Residues Arg-212, Ser-231, and Gln-235 each coordinate 3-dehydroquinate.

This sequence belongs to the type-I 3-dehydroquinase family. In terms of assembly, homodimer.

It carries out the reaction 3-dehydroquinate = 3-dehydroshikimate + H2O. It participates in metabolic intermediate biosynthesis; chorismate biosynthesis; chorismate from D-erythrose 4-phosphate and phosphoenolpyruvate: step 3/7. In terms of biological role, involved in the third step of the chorismate pathway, which leads to the biosynthesis of aromatic amino acids. Catalyzes the cis-dehydration of 3-dehydroquinate (DHQ) and introduces the first double bond of the aromatic ring to yield 3-dehydroshikimate. The protein is 3-dehydroquinate dehydratase of Listeria monocytogenes serotype 4b (strain CLIP80459).